We begin with the raw amino-acid sequence, 132 residues long: UPF0146 protein PF0123 (132 aa).

Belongs to the UPF0146 family.

In Pyrococcus furiosus (strain ATCC 43587 / DSM 3638 / JCM 8422 / Vc1), this protein is UPF0146 protein PF0123.